A 153-amino-acid polypeptide reads, in one-letter code: 6,7-dimethyl-8-ribityllumazine synthase (153 aa).

5-amino-6-(D-ribitylamino)uracil-binding positions include F23, 57–59 (AYE), and 81–83 (AVI). 86–87 (AT) contributes to the (2S)-2-hydroxy-3-oxobutyl phosphate binding site. The active-site Proton donor is H89. F113 is a binding site for 5-amino-6-(D-ribitylamino)uracil. Residue R127 participates in (2S)-2-hydroxy-3-oxobutyl phosphate binding.

The protein belongs to the DMRL synthase family.

It catalyses the reaction (2S)-2-hydroxy-3-oxobutyl phosphate + 5-amino-6-(D-ribitylamino)uracil = 6,7-dimethyl-8-(1-D-ribityl)lumazine + phosphate + 2 H2O + H(+). It participates in cofactor biosynthesis; riboflavin biosynthesis; riboflavin from 2-hydroxy-3-oxobutyl phosphate and 5-amino-6-(D-ribitylamino)uracil: step 1/2. Its function is as follows. Catalyzes the formation of 6,7-dimethyl-8-ribityllumazine by condensation of 5-amino-6-(D-ribitylamino)uracil with 3,4-dihydroxy-2-butanone 4-phosphate. This is the penultimate step in the biosynthesis of riboflavin. The sequence is that of 6,7-dimethyl-8-ribityllumazine synthase from Leptospira borgpetersenii serovar Hardjo-bovis (strain JB197).